Consider the following 600-residue polypeptide: Albumin (600 aa).

The signal sequence occupies residues 1–10 (LLFLFSSAYS). The propeptide occupies 11–16 (RGVFRR). Albumin domains are found at residues 11–202 (RGVF…DELR), 203–395 (DEGK…EFQP), and 396–593 (LVEE…KFVA). His-19 provides a ligand contact to Cu cation. At Ser-21 the chain carries Phosphoserine. The Ca(2+) site is built by Glu-22 and Asp-29. Cys-69 and Cys-78 are oxidised to a cystine. Ser-74 and Ser-81 each carry phosphoserine. Zn(2+) is bound at residue His-83. 6 disulfides stabilise this stretch: Cys-91–Cys-107, Cys-106–Cys-117, Cys-140–Cys-185, Cys-184–Cys-193, Cys-216–Cys-262, and Cys-261–Cys-269. Thr-99 carries the post-translational modification Phosphothreonine. Position 221 is an N6-succinyllysine (Lys-221). Lys-256 is a (4Z,15Z)-bilirubin IXalpha binding site. Glu-260 is a Ca(2+) binding site. 2 residues coordinate Zn(2+): His-263 and Asp-265. Ca(2+)-binding residues include Asp-265, Glu-268, Asp-271, and Asp-275. Cystine bridges form between Cys-281–Cys-295, Cys-294–Cys-305, Cys-332–Cys-377, Cys-376–Cys-385, Cys-408–Cys-454, Cys-453–Cys-464, Cys-477–Cys-493, and Cys-492–Cys-503. Phosphoserine is present on Ser-289. Position 435 is a phosphoserine (Ser-435). Phosphothreonine occurs at positions 436 and 438. Lys-452 bears the N6-succinyllysine mark. Position 505 is a phosphoserine (Ser-505). Cystine bridges form between Cys-530/Cys-575 and Cys-574/Cys-583. An N6-succinyllysine modification is found at Lys-535. Lys-550 carries the post-translational modification N6-methyllysine. At Lys-580 the chain carries N6-succinyllysine.

The protein belongs to the ALB/AFP/VDB family. In terms of assembly, interacts with FCGRT; this interaction regulates ALB homeostasis. Interacts with TASOR. In plasma, occurs in a covalently-linked complex with chromophore-bound alpha-1-microglobulin; this interaction does not prevent fatty acid binding to ALB. In terms of processing, phosphorylated by FAM20C in the extracellular medium. In terms of tissue distribution, plasma.

Its subcellular location is the secreted. Binds water, Ca(2+), Na(+), K(+), fatty acids, hormones, bilirubin and drugs. Its main function is the regulation of the colloidal osmotic pressure of blood. Major zinc transporter in plasma, typically binds about 80% of all plasma zinc. Major calcium and magnesium transporter in plasma, binds approximately 45% of circulating calcium and magnesium in plasma. Potentially has more than two calcium-binding sites and might additionally bind calcium in a non-specific manner. The shared binding site between zinc and calcium at residue Asp-265 suggests a crosstalk between zinc and calcium transport in the blood. The rank order of affinity is zinc &gt; calcium &gt; magnesium. Binds to the bacterial siderophore enterobactin and inhibits enterobactin-mediated iron uptake of E.coli from ferric transferrin, and may thereby limit the utilization of iron and growth of enteric bacteria such as E.coli. Does not prevent iron uptake by the bacterial siderophore aerobactin. This is Albumin (ALB) from Macaca mulatta (Rhesus macaque).